Consider the following 156-residue polypeptide: DNA gyrase inhibitor (156 aa).

This sequence belongs to the DNA gyrase inhibitor family. As to quaternary structure, interacts with DNA gyrase.

The protein resides in the cytoplasm. Its function is as follows. Inhibits the supercoiling activity of DNA gyrase. Acts by inhibiting DNA gyrase at an early step, prior to (or at the step of) binding of DNA by the gyrase. It protects cells against toxins that target DNA gyrase, by inhibiting activity of these toxins and reducing the formation of lethal double-strand breaks in the cell. The polypeptide is DNA gyrase inhibitor (Serratia proteamaculans (strain 568)).